The following is a 431-amino-acid chain: Sulfide dehydrogenase [flavocytochrome c] flavoprotein chain (431 aa).

Positions 1–30 (MTLNRRDFIKTSGAAVAAVGILGFPHLAFG) form a signal peptide, tat-type signal. 70–76 (YTCYLSN) serves as a coordination point for FAD. Residues Cys191 and Cys367 are joined by a disulfide bond.

In terms of assembly, dimer of one cytochrome and one flavoprotein. In terms of processing, predicted to be exported by the Tat system. The position of the signal peptide cleavage has been experimentally proven.

The protein localises to the periplasm. The enzyme catalyses hydrogen sulfide + 2 Fe(III)-[cytochrome c] = sulfur + 2 Fe(II)-[cytochrome c] + H(+). This chain is Sulfide dehydrogenase [flavocytochrome c] flavoprotein chain (fccB), found in Allochromatium vinosum (strain ATCC 17899 / DSM 180 / NBRC 103801 / NCIMB 10441 / D) (Chromatium vinosum).